Here is a 393-residue protein sequence, read N- to C-terminus: NAD(P)H-quinone oxidoreductase subunit H, chloroplastic (393 aa).

This sequence belongs to the complex I 49 kDa subunit family. In terms of assembly, NDH is composed of at least 16 different subunits, 5 of which are encoded in the nucleus.

The protein localises to the plastid. The protein resides in the chloroplast thylakoid membrane. It catalyses the reaction a plastoquinone + NADH + (n+1) H(+)(in) = a plastoquinol + NAD(+) + n H(+)(out). The catalysed reaction is a plastoquinone + NADPH + (n+1) H(+)(in) = a plastoquinol + NADP(+) + n H(+)(out). In terms of biological role, NDH shuttles electrons from NAD(P)H:plastoquinone, via FMN and iron-sulfur (Fe-S) centers, to quinones in the photosynthetic chain and possibly in a chloroplast respiratory chain. The immediate electron acceptor for the enzyme in this species is believed to be plastoquinone. Couples the redox reaction to proton translocation, and thus conserves the redox energy in a proton gradient. The protein is NAD(P)H-quinone oxidoreductase subunit H, chloroplastic of Amborella trichopoda.